A 311-amino-acid chain; its full sequence is tRNA dimethylallyltransferase (311 aa).

12-19 (GPTASGKT) contacts ATP. 14-19 (TASGKT) serves as a coordination point for substrate. 2 interaction with substrate tRNA regions span residues 37–40 (DSAM) and 161–165 (QRIQR).

It belongs to the IPP transferase family. Monomer. It depends on Mg(2+) as a cofactor.

The catalysed reaction is adenosine(37) in tRNA + dimethylallyl diphosphate = N(6)-dimethylallyladenosine(37) in tRNA + diphosphate. Catalyzes the transfer of a dimethylallyl group onto the adenine at position 37 in tRNAs that read codons beginning with uridine, leading to the formation of N6-(dimethylallyl)adenosine (i(6)A). The polypeptide is tRNA dimethylallyltransferase (Coxiella burnetii (strain Dugway 5J108-111)).